Reading from the N-terminus, the 147-residue chain is NADH-quinone oxidoreductase subunit A (147 aa).

3 helical membrane-spanning segments follow: residues 16–36 (FAIFLIVAIGLCCLMLVGGWF), 68–88 (FYLVAMFFVIFDVEALYLFAW), and 97–117 (WVGFVEAAIFIFVLLAGLVYL).

It belongs to the complex I subunit 3 family. NDH-1 is composed of 13 different subunits. Subunits NuoA, H, J, K, L, M, N constitute the membrane sector of the complex.

It is found in the cell inner membrane. The enzyme catalyses a quinone + NADH + 5 H(+)(in) = a quinol + NAD(+) + 4 H(+)(out). Functionally, NDH-1 shuttles electrons from NADH, via FMN and iron-sulfur (Fe-S) centers, to quinones in the respiratory chain. The immediate electron acceptor for the enzyme in this species is believed to be ubiquinone. Couples the redox reaction to proton translocation (for every two electrons transferred, four hydrogen ions are translocated across the cytoplasmic membrane), and thus conserves the redox energy in a proton gradient. This Salmonella paratyphi A (strain ATCC 9150 / SARB42) protein is NADH-quinone oxidoreductase subunit A.